A 192-amino-acid polypeptide reads, in one-letter code: Holliday junction branch migration complex subunit RuvA (192 aa).

The segment at 1–64 (MLGRLTGLLA…EDAQVLFGFL (64 aa)) is domain I. Residues 65 to 139 (TAPERETFRM…GKLGADLGPA (75 aa)) are domain II. The flexible linker stretch occupies residues 139-143 (AIGGK). The tract at residues 144 to 192 (PASDAQADILQALIALGYSEREAQAAVKALPAEVGVSDGIKLALKALAR) is domain III.

Belongs to the RuvA family. In terms of assembly, homotetramer. Forms an RuvA(8)-RuvB(12)-Holliday junction (HJ) complex. HJ DNA is sandwiched between 2 RuvA tetramers; dsDNA enters through RuvA and exits via RuvB. An RuvB hexamer assembles on each DNA strand where it exits the tetramer. Each RuvB hexamer is contacted by two RuvA subunits (via domain III) on 2 adjacent RuvB subunits; this complex drives branch migration. In the full resolvosome a probable DNA-RuvA(4)-RuvB(12)-RuvC(2) complex forms which resolves the HJ.

The protein localises to the cytoplasm. Functionally, the RuvA-RuvB-RuvC complex processes Holliday junction (HJ) DNA during genetic recombination and DNA repair, while the RuvA-RuvB complex plays an important role in the rescue of blocked DNA replication forks via replication fork reversal (RFR). RuvA specifically binds to HJ cruciform DNA, conferring on it an open structure. The RuvB hexamer acts as an ATP-dependent pump, pulling dsDNA into and through the RuvAB complex. HJ branch migration allows RuvC to scan DNA until it finds its consensus sequence, where it cleaves and resolves the cruciform DNA. The chain is Holliday junction branch migration complex subunit RuvA from Methylibium petroleiphilum (strain ATCC BAA-1232 / LMG 22953 / PM1).